Consider the following 239-residue polypeptide: dITP/XTP pyrophosphatase (239 aa).

7 to 12 lines the substrate pocket; that stretch reads THNEGK. Aspartate 74 acts as the Proton acceptor in catalysis. Aspartate 74 lines the Mg(2+) pocket. Substrate-binding positions include serine 75, 182-185, lysine 214, and 219-220; these read FGYD and HR.

The protein belongs to the HAM1 NTPase family. Homodimer. Mg(2+) is required as a cofactor.

It carries out the reaction XTP + H2O = XMP + diphosphate + H(+). The enzyme catalyses dITP + H2O = dIMP + diphosphate + H(+). It catalyses the reaction ITP + H2O = IMP + diphosphate + H(+). In terms of biological role, pyrophosphatase that catalyzes the hydrolysis of nucleoside triphosphates to their monophosphate derivatives, with a high preference for the non-canonical purine nucleotides XTP (xanthosine triphosphate), dITP (deoxyinosine triphosphate) and ITP. Seems to function as a house-cleaning enzyme that removes non-canonical purine nucleotides from the nucleotide pool, thus preventing their incorporation into DNA/RNA and avoiding chromosomal lesions. In Bifidobacterium animalis subsp. lactis (strain AD011), this protein is dITP/XTP pyrophosphatase.